The chain runs to 210 residues: Probable nicotinate-nucleotide adenylyltransferase (210 aa).

Belongs to the NadD family.

The catalysed reaction is nicotinate beta-D-ribonucleotide + ATP + H(+) = deamido-NAD(+) + diphosphate. Its pathway is cofactor biosynthesis; NAD(+) biosynthesis; deamido-NAD(+) from nicotinate D-ribonucleotide: step 1/1. Catalyzes the reversible adenylation of nicotinate mononucleotide (NaMN) to nicotinic acid adenine dinucleotide (NaAD). The protein is Probable nicotinate-nucleotide adenylyltransferase of Vesicomyosocius okutanii subsp. Calyptogena okutanii (strain HA).